A 467-amino-acid polypeptide reads, in one-letter code: MTKIASVANILKGKITVGETVTVRGWIRTRRDSKAGLSFLAIYDGSCFDPIQAIVNNDIENYETEILRLTTGCSVVVTGKIVESPAEGQAVELQADKIEVSGWVDDPETYPMSAKRHSIEYLREVAHLRPRTNIIGAVARVRHCLAQAIHRFFHEQGFYWVATPLITASDTEGAGEMFRVSTLDLENLPRTDKGAVDFSQDFFGKESFLTVSGQLNGESYACALSKIYTFGPTFRAENSNTTRHLAEFWMVEPEIAFATLADNAKLAEDMLKYVFRAVLNEREDDLKFFEKHVDKNVITRLKDFINSDFAQIDYTDAIDILLKSGKAFEFPVSWGIDLSSEHERYLAEEYFKSPVVVKNYPKDIKAFYMRLNDDGKTVAAMDVLAPGIGEIIGGSQREERLEVLDKRIAEMGLKAEDYWWYRDLRRYGTVPHAGFGLGFERLIVYVTGVQNIRDVIPFPRTPRNANF.

The protein belongs to the class-II aminoacyl-tRNA synthetase family. In terms of assembly, homodimer.

It is found in the cytoplasm. The catalysed reaction is tRNA(Asn) + L-asparagine + ATP = L-asparaginyl-tRNA(Asn) + AMP + diphosphate + H(+). The protein is Asparagine--tRNA ligase of Histophilus somni (strain 2336) (Haemophilus somnus).